Consider the following 37-residue polypeptide: Esculentin-2L (37 aa).

A disulfide bridge connects residues Cys-31 and Cys-37.

In terms of tissue distribution, expressed by the skin glands.

Its subcellular location is the secreted. In terms of biological role, antibacterial activity against Gram-positive bacterium S.aureus and Gram-negative bacterium E.coli. Has activity against C.albicans. The chain is Esculentin-2L from Rana luteiventris (Columbia spotted frog).